The following is a 369-amino-acid chain: Endophilin-A (369 aa).

The 231-residue stretch at 18 to 248 folds into the BAR domain; it reads TEKMGGAEGT…LQEKRAEAES (231 aa). Residues 227-249 adopt a coiled-coil conformation; the sequence is QCADVLRGLQETLQEKRAEAESR. Residues 275-294 show a composition bias toward low complexity; the sequence is GTPSHISSSASPLPSPMRSP. The tract at residues 275–297 is disordered; sequence GTPSHISSSASPLPSPMRSPAKS. The region spanning 305-364 is the SH3 domain; the sequence is QQQPCCQALYDFDPENPGELGFKENDIITLLNRVDDNWYEGAVNGRTGYFPQSYVQVQVP.

It belongs to the endophilin family.

It localises to the cytoplasm. The protein localises to the membrane. In terms of biological role, required presynaptically at the neuromuscular junction. Implicated in synaptic vesicle endocytosis. The sequence is that of Endophilin-A from Drosophila virilis (Fruit fly).